Reading from the N-terminus, the 572-residue chain is Urease subunit alpha (572 aa).

The Urease domain occupies 134–572 (GGIDAHVHFI…LPMAQRYFLF (439 aa)). Ni(2+)-binding residues include H139, H141, and K222. Residue K222 is modified to N6-carboxylysine. H224 contributes to the substrate binding site. Ni(2+) contacts are provided by H251 and H277. The active-site Proton donor is the H325. Position 365 (D365) interacts with Ni(2+).

It belongs to the metallo-dependent hydrolases superfamily. Urease alpha subunit family. As to quaternary structure, heterotrimer of UreA (gamma), UreB (beta) and UreC (alpha) subunits. Three heterotrimers associate to form the active enzyme. Ni cation serves as cofactor. Post-translationally, carboxylation allows a single lysine to coordinate two nickel ions.

Its subcellular location is the cytoplasm. The enzyme catalyses urea + 2 H2O + H(+) = hydrogencarbonate + 2 NH4(+). Its pathway is nitrogen metabolism; urea degradation; CO(2) and NH(3) from urea (urease route): step 1/1. The sequence is that of Urease subunit alpha from Synechococcus sp. (strain JA-2-3B'a(2-13)) (Cyanobacteria bacterium Yellowstone B-Prime).